The chain runs to 212 residues: Adenylate kinase (212 aa).

Position 10–15 (10–15 (GAGKGT)) interacts with ATP. The tract at residues 30 to 59 (STGDMFRAAMANQTEMGRLAKSYIDKGELV) is NMP. AMP is bound by residues threonine 31, arginine 36, 57 to 59 (ELV), 86 to 89 (GYPR), and glutamine 93. The LID stretch occupies residues 127-159 (GRIINRKTGETFHKVFNPPVDYKEEDYYQREDD). Residues arginine 128 and 137–138 (TF) contribute to the ATP site. AMP-binding residues include arginine 156 and arginine 167. Glutamine 195 contributes to the ATP binding site.

The protein belongs to the adenylate kinase family. Monomer.

It is found in the cytoplasm. It catalyses the reaction AMP + ATP = 2 ADP. It functions in the pathway purine metabolism; AMP biosynthesis via salvage pathway; AMP from ADP: step 1/1. Catalyzes the reversible transfer of the terminal phosphate group between ATP and AMP. Plays an important role in cellular energy homeostasis and in adenine nucleotide metabolism. The chain is Adenylate kinase from Streptococcus pyogenes serotype M3 (strain ATCC BAA-595 / MGAS315).